A 158-amino-acid polypeptide reads, in one-letter code: Inner membrane assembly complex subunit 17 (158 aa).

The N-terminal 15 residues, Met-1–Leu-15, are a transit peptide targeting the mitochondrion. The Mitochondrial matrix portion of the chain corresponds to Ala-16–Phe-85. The chain crosses the membrane as a helical span at residues Val-86 to Trp-108. Residues Lys-109–Trp-158 are Mitochondrial intermembrane-facing. The stretch at Leu-110 to Ser-140 forms a coiled coil.

It belongs to the INA17 family. In terms of assembly, component of the inner membrane assembly (INA) complex, composed of INA17 and INA22. Interacts with a subset of F(1)F(0)-ATP synthase subunits of the F(1)-domain and the peripheral stalk.

The protein resides in the mitochondrion inner membrane. Component of the INA complex (INAC) that promotes the biogenesis of mitochondrial F(1)F(0)-ATP synthase. INAC facilitates the assembly of the peripheral stalk and promotes the assembly of the catalytic F(1)-domain with the membrane-embedded F(0)-domain. The chain is Inner membrane assembly complex subunit 17 from Kluyveromyces lactis (strain ATCC 8585 / CBS 2359 / DSM 70799 / NBRC 1267 / NRRL Y-1140 / WM37) (Yeast).